We begin with the raw amino-acid sequence, 115 residues long: Non-specific lipid-transfer protein 3 (115 aa).

The N-terminal stretch at 1-23 (MAFALRFFTCLVLTVCIVASVDA) is a signal peptide. Disulfide bonds link cysteine 27/cysteine 74, cysteine 37/cysteine 51, cysteine 52/cysteine 97, and cysteine 72/cysteine 111.

It belongs to the plant LTP family.

Plant non-specific lipid-transfer proteins transfer phospholipids as well as galactolipids across membranes. May play a role in wax or cutin deposition in the cell walls of expanding epidermal cells and certain secretory tissues. The chain is Non-specific lipid-transfer protein 3 (LTP3) from Arabidopsis thaliana (Mouse-ear cress).